We begin with the raw amino-acid sequence, 74 residues long: Tetrahydromethanopterin S-methyltransferase subunit G (74 aa).

Residues 50–70 (IGILYGLVIGLYLCMLYILLG) form a helical membrane-spanning segment.

This sequence belongs to the MtrG family. In terms of assembly, the complex is composed of 8 subunits; MtrA, MtrB, MtrC, MtrD, MtrE, MtrF, MtrG and MtrH.

It localises to the cell membrane. The enzyme catalyses 5-methyl-5,6,7,8-tetrahydromethanopterin + coenzyme M + 2 Na(+)(in) = 5,6,7,8-tetrahydromethanopterin + methyl-coenzyme M + 2 Na(+)(out). It participates in one-carbon metabolism; methanogenesis from CO(2); methyl-coenzyme M from 5,10-methylene-5,6,7,8-tetrahydromethanopterin: step 2/2. In terms of biological role, part of a complex that catalyzes the formation of methyl-coenzyme M and tetrahydromethanopterin from coenzyme M and methyl-tetrahydromethanopterin. This is an energy-conserving, sodium-ion translocating step. The protein is Tetrahydromethanopterin S-methyltransferase subunit G of Methanopyrus kandleri (strain AV19 / DSM 6324 / JCM 9639 / NBRC 100938).